The chain runs to 187 residues: Elongation factor P (187 aa).

This sequence belongs to the elongation factor P family.

The protein localises to the cytoplasm. The protein operates within protein biosynthesis; polypeptide chain elongation. In terms of biological role, involved in peptide bond synthesis. Stimulates efficient translation and peptide-bond synthesis on native or reconstituted 70S ribosomes in vitro. Probably functions indirectly by altering the affinity of the ribosome for aminoacyl-tRNA, thus increasing their reactivity as acceptors for peptidyl transferase. The polypeptide is Elongation factor P (Roseiflexus sp. (strain RS-1)).